We begin with the raw amino-acid sequence, 278 residues long: Bifunctional protein FolD (278 aa).

Residues 162–164 (GAG) and Ile228 each bind NADP(+).

It belongs to the tetrahydrofolate dehydrogenase/cyclohydrolase family. As to quaternary structure, homodimer.

It carries out the reaction (6R)-5,10-methylene-5,6,7,8-tetrahydrofolate + NADP(+) = (6R)-5,10-methenyltetrahydrofolate + NADPH. The enzyme catalyses (6R)-5,10-methenyltetrahydrofolate + H2O = (6R)-10-formyltetrahydrofolate + H(+). It participates in one-carbon metabolism; tetrahydrofolate interconversion. Catalyzes the oxidation of 5,10-methylenetetrahydrofolate to 5,10-methenyltetrahydrofolate and then the hydrolysis of 5,10-methenyltetrahydrofolate to 10-formyltetrahydrofolate. This is Bifunctional protein FolD from Hydrogenobaculum sp. (strain Y04AAS1).